A 237-amino-acid chain; its full sequence is Ribonuclease PH (237 aa).

Residues Arg-86 and 124 to 126 (GTR) each bind phosphate.

This sequence belongs to the RNase PH family. Homohexameric ring arranged as a trimer of dimers.

It carries out the reaction tRNA(n+1) + phosphate = tRNA(n) + a ribonucleoside 5'-diphosphate. Phosphorolytic 3'-5' exoribonuclease that plays an important role in tRNA 3'-end maturation. Removes nucleotide residues following the 3'-CCA terminus of tRNAs; can also add nucleotides to the ends of RNA molecules by using nucleoside diphosphates as substrates, but this may not be physiologically important. Probably plays a role in initiation of 16S rRNA degradation (leading to ribosome degradation) during starvation. The protein is Ribonuclease PH of Methylorubrum extorquens (strain PA1) (Methylobacterium extorquens).